A 282-amino-acid chain; its full sequence is TPR repeat protein oca3 (282 aa).

4 TPR repeats span residues 16–50, 71–104, 139–172, and 174–211; these read IVALFSQQEAYAKLGKYKDEIWDVYQKVFIAALTT, PRVEGLYGMFLEATASEKDAMSYYNSKLSEDPTH, LEAWAELADIYVSVEAFESAIFCYEEMVLLQPFE, and RLFARLGDLYFVLAQSNATNYWFSLKHYCRSVEICEEY.

Its subcellular location is the cytoplasm. The protein resides in the nucleus. Its function is as follows. May be involved in cell cycle regulation. The protein is TPR repeat protein oca3 (oca3) of Schizosaccharomyces pombe (strain 972 / ATCC 24843) (Fission yeast).